Here is an 80-residue protein sequence, read N- to C-terminus: Small ribosomal subunit protein uS17 (80 aa).

Belongs to the universal ribosomal protein uS17 family. Part of the 30S ribosomal subunit.

Its function is as follows. One of the primary rRNA binding proteins, it binds specifically to the 5'-end of 16S ribosomal RNA. This Cereibacter sphaeroides (strain ATCC 17025 / ATH 2.4.3) (Rhodobacter sphaeroides) protein is Small ribosomal subunit protein uS17.